The following is a 673-amino-acid chain: Polyunsaturated fatty acid 5-lipoxygenase (673 aa).

In terms of domain architecture, PLAT spans 2–117 (PSYTVTVATG…EIVLRDGRAK (116 aa)). Gly17, Thr18, Asp19, Asn44, Asp45, Glu47, Asp79, and Asp80 together coordinate Ca(2+). The 556-residue stretch at 118 to 673 (LARDDQIHIL…PDRIPNSVAI (556 aa)) folds into the Lipoxygenase domain. Ser271 is modified (phosphoserine). Fe cation contacts are provided by His367 and His372. Residue Ser523 is modified to Phosphoserine. Residues His550, Asn554, and Ile673 each contribute to the Fe cation site.

It belongs to the lipoxygenase family. As to quaternary structure, homodimer. Interacts with ALOX5AP and LTC4S. Interacts with COTL1, the interaction is required for stability and efficient catalytic activity. Interacts with PIK3R1; this interaction bridges ALOX5 with CD40 after CD40 ligation in B cells and leads to the production of reactive oxygen species (ROS). Interacts (via PLAT domain) with DICER1 (via Dicer dsRNA-binding fold domain); this interaction enhances arachidonate 5-lipoxygenase activity and modifies the miRNA precursor processing activity of DICER1. The cofactor is Fe cation. Post-translationally, serine phosphorylation by MAPKAPK2 is stimulated by arachidonic acid. Phosphorylation on Ser-523 by PKA has an inhibitory effect. Phosphorylation on Ser-271 prevents export from the nucleus. Phosphorylation at Ser-523 is stimulated by 8-bromo-3',5'-cyclic AMP or prostaglandin E2.

Its subcellular location is the cytoplasm. It localises to the nucleus matrix. The protein resides in the nucleus membrane. It is found in the perinuclear region. The protein localises to the cytosol. Its subcellular location is the nucleus envelope. It localises to the nucleus intermembrane space. The enzyme catalyses (5Z,8Z,11Z,14Z)-eicosatetraenoate + O2 = leukotriene A4 + H2O. The catalysed reaction is 18-HEPE + O2 = (5S)-hydroperoxy-18-hydroxy-(7E,9E,11Z,14Z,16E)-eicosapentaenoate. It carries out the reaction (18R)-hydroxy-(5Z,8Z,11Z,14Z,16E)-eicosapentaenoate + O2 = (5S)-hydroperoxy-(18R)-hydroxy-(6E,8Z,11Z,14Z,16E)-eicosapentaenoate. It catalyses the reaction (18S)-hydroxy-(5Z,8Z,11Z,14Z,16E)-eicosapentaenoate + O2 = (5S)-hydroperoxy-(18S)-hydroxy-(6E,8Z,11Z,14Z,16E)-eicosapentaenoate. The enzyme catalyses (5S)-hydroperoxy-(18S)-hydroxy-(6E,8Z,11Z,14Z,16E)-eicosapentaenoate = (5S,6S)-epoxy-(18S)-hydroxy-(7E,9E,11Z,14Z,16E)-eicosapentaenoate + H2O. The catalysed reaction is (5S)-hydroperoxy-(18R)-hydroxy-(6E,8Z,11Z,14Z,16E)-eicosapentaenoate = (5S,6S)-epoxy-(18R)-hydroxy-(7E,9E,11Z,14Z,16E)-eicosapentaenoate + H2O. It carries out the reaction (5S)-hydroperoxy-18-hydroxy-(7E,9E,11Z,14Z,16E)-eicosapentaenoate = (5S,6S)-epoxy-18-hydroxy-(7E,9E,11Z,14Z,16E)-eicosapentaenoate + H2O. It catalyses the reaction (5Z,8Z,11Z,14Z)-eicosatetraenoate + O2 = (5S)-hydroperoxy-(6E,8Z,11Z,14Z)-eicosatetraenoate. The enzyme catalyses (15S)-hydroxy-(5Z,8Z,11Z,13E)-eicosatetraenoate + O2 = (5S)-hydroperoxy-(15S)-hydroxy-(6E,8Z,11Z,13E)-eicosatetraenoate. The catalysed reaction is (5S)-hydroperoxy-(6E,8Z,11Z,14Z)-eicosatetraenoate = leukotriene A4 + H2O. It carries out the reaction (5Z,8Z,11Z,14Z)-eicosatetraenoate + O2 = (8S)-hydroperoxy-(5Z,9E,11Z,14Z)-eicosatetraenoate. It catalyses the reaction (5Z,8Z,11Z,14Z)-eicosatetraenoate + O2 = (12S)-hydroperoxy-(5Z,8Z,10E,14Z)-eicosatetraenoate. The enzyme catalyses (5Z,8Z)-eicosadienoate + O2 = (5S)-hydroperoxy-(6E,8Z)-eicosadienoate. The catalysed reaction is (12S)-hydroxy-(5Z,8Z,10E,14Z)-eicosatetraenoate + O2 = (5S)-hydroperoxy-(12S)-hydroxy-(6E,8Z,10E,14Z)-eicosatetraenoate. It carries out the reaction (5Z,8Z,11Z,14Z,17Z)-eicosapentaenoate + O2 = 5-hydroperoxy-(6E,8Z,11Z,14Z,17Z)-eicosapentaenoate. It catalyses the reaction (4Z,7Z,10Z,13Z,16Z,19Z)-docosahexaenoate + O2 = (14S)-hydroperoxy-(4Z,7Z,10Z,12E,16Z,19Z)-docosahexaenoate. The enzyme catalyses (4Z,7Z,10Z,13Z,16Z,19Z)-docosahexaenoate + O2 = (7S)-hydroperoxy-(4Z,8E,10Z,13Z,16Z,19Z)-docosahexaenoate. The catalysed reaction is (4Z,7Z,10Z,13Z,16Z,19Z)-docosahexaenoate + O2 = (17S)-hydroperoxy-(4Z,7Z,10Z,13Z,15E,19Z)-docosahexaenoate. Its pathway is lipid metabolism; leukotriene A4 biosynthesis. In terms of biological role, catalyzes the oxygenation of arachidonate to 5-hydroperoxyeicosatetraenoate (5-HPETE) followed by the dehydration to 5,6- epoxyeicosatetraenoate (Leukotriene A4/LTA4), the first two steps in the biosynthesis of leukotrienes, which are potent mediators of inflammation. Also catalyzes the oxygenation of arachidonate into 8-hydroperoxyicosatetraenoate (8-HPETE) and 12-hydroperoxyicosatetraenoate (12-HPETE). Displays lipoxin synthase activity being able to convert (15S)-HETE into a conjugate tetraene. Although arachidonate is the preferred substrate, this enzyme can also metabolize oxidized fatty acids derived from arachidonate such as (15S)-HETE, eicosapentaenoate (EPA) such as (18R)- and (18S)-HEPE or docosahexaenoate (DHA) which lead to the formation of specialized pro-resolving mediators (SPM) lipoxin and resolvins E and D respectively, therefore it participates in anti-inflammatory responses. Oxidation of DHA directly inhibits endothelial cell proliferation and sprouting angiogenesis via peroxisome proliferator-activated receptor gamma (PPARgamma). It does not catalyze the oxygenation of linoleic acid and does not convert (5S)-HETE to lipoxin isomers. In addition to inflammatory processes, it participates in dendritic cell migration, wound healing through an antioxidant mechanism based on heme oxygenase-1 (HO-1) regulation expression, monocyte adhesion to the endothelium via ITGAM expression on monocytes. Moreover, it helps establish an adaptive humoral immunity by regulating primary resting B cells and follicular helper T cells and participates in the CD40-induced production of reactive oxygen species (ROS) after CD40 ligation in B cells through interaction with PIK3R1 that bridges ALOX5 with CD40. May also play a role in glucose homeostasis, regulation of insulin secretion and palmitic acid-induced insulin resistance via AMPK. Can regulate bone mineralization and fat cell differentiation increases in induced pluripotent stem cells. This Mesocricetus auratus (Golden hamster) protein is Polyunsaturated fatty acid 5-lipoxygenase.